A 280-amino-acid chain; its full sequence is Phosphatidylglycerol--prolipoprotein diacylglyceryl transferase (280 aa).

A run of 4 helical transmembrane segments spans residues 23-43 (LRWY…LAGV), 58-78 (LLFW…VLFY), 93-113 (IWTG…ALWW), and 120-140 (CTFL…LGAG). A 1,2-diacyl-sn-glycero-3-phospho-(1'-sn-glycerol) is bound at residue Arg-141. The next 3 helical transmembrane spans lie at 173-193 (PSQL…LWLY), 200-220 (IGAV…FVEF), and 241-261 (QGQI…VWAV).

The protein belongs to the Lgt family.

It localises to the cell inner membrane. It catalyses the reaction L-cysteinyl-[prolipoprotein] + a 1,2-diacyl-sn-glycero-3-phospho-(1'-sn-glycerol) = an S-1,2-diacyl-sn-glyceryl-L-cysteinyl-[prolipoprotein] + sn-glycerol 1-phosphate + H(+). Its pathway is protein modification; lipoprotein biosynthesis (diacylglyceryl transfer). Catalyzes the transfer of the diacylglyceryl group from phosphatidylglycerol to the sulfhydryl group of the N-terminal cysteine of a prolipoprotein, the first step in the formation of mature lipoproteins. The chain is Phosphatidylglycerol--prolipoprotein diacylglyceryl transferase from Pseudoalteromonas atlantica (strain T6c / ATCC BAA-1087).